The sequence spans 230 residues: Magnesium-protoporphyrin O-methyltransferase (230 aa).

Belongs to the class I-like SAM-binding methyltransferase superfamily. Magnesium protoporphyrin O-methyltransferase family.

It carries out the reaction Mg-protoporphyrin IX + S-adenosyl-L-methionine = Mg-protoporphyrin IX 13-monomethyl ester + S-adenosyl-L-homocysteine. The protein operates within porphyrin-containing compound metabolism; chlorophyll biosynthesis (light-independent). Converts Mg-protoporphyrin IX to Mg-protoporphyrin IX methylester using S-adenosyl-L-methionine as a cofactor. The chain is Magnesium-protoporphyrin O-methyltransferase (chlM) from Synechocystis sp. (strain ATCC 27184 / PCC 6803 / Kazusa).